The sequence spans 283 residues: Polyamine aminopropyltransferase (283 aa).

Residues 5-240 (NTWFTEIHQD…GWWTATMACK (236 aa)) form the PABS domain. Gln33 serves as a coordination point for S-methyl-5'-thioadenosine. Positions 64 and 88 each coordinate spermidine. S-methyl-5'-thioadenosine contacts are provided by residues Asp108 and 139-140 (DG). The active-site Proton acceptor is Asp158. Residue 158-161 (DSTD) coordinates spermidine. An S-methyl-5'-thioadenosine-binding site is contributed by Pro165.

Belongs to the spermidine/spermine synthase family. As to quaternary structure, homodimer or homotetramer.

Its subcellular location is the cytoplasm. The catalysed reaction is S-adenosyl 3-(methylsulfanyl)propylamine + putrescine = S-methyl-5'-thioadenosine + spermidine + H(+). It participates in amine and polyamine biosynthesis; spermidine biosynthesis; spermidine from putrescine: step 1/1. Functionally, catalyzes the irreversible transfer of a propylamine group from the amino donor S-adenosylmethioninamine (decarboxy-AdoMet) to putrescine (1,4-diaminobutane) to yield spermidine. In Thioalkalivibrio sulfidiphilus (strain HL-EbGR7), this protein is Polyamine aminopropyltransferase.